The following is a 153-amino-acid chain: Adenosine 5'-monophosphoramidase HINT3 (153 aa).

One can recognise an HIT domain in the interval isoleucine 20 to arginine 130. AMP is bound by residues aspartate 46 to isoleucine 47 and histidine 115 to histidine 117. The short motif at histidine 113 to histidine 117 is the Histidine triad motif element. Histidine 115 serves as the catalytic Tele-AMP-histidine intermediate.

The protein belongs to the HINT family. In terms of assembly, forms dimers to octamers and even larger oligomer.

The protein resides in the cytoplasm. The protein localises to the nucleus. The catalysed reaction is adenosine 5'-phosphoramidate + H2O = AMP + NH4(+). Functionally, exhibits adenosine 5'-monophosphoramidase activity, hydrolyzing purine nucleotide phosphoramidates with a single phosphate group such as adenosine 5'monophosphoramidate (AMP-NH2) to yield AMP and NH2. Hydrolyzes lysyl-AMP (AMP-N-epsilon-(N-alpha-acetyl lysine methyl ester)) generated by lysine tRNA ligase. The chain is Adenosine 5'-monophosphoramidase HINT3 (hint3) from Xenopus tropicalis (Western clawed frog).